The chain runs to 284 residues: Pheromone-regulated membrane protein 4 (284 aa).

A helical membrane pass occupies residues 20-38 (IISLTLVLLGVFSFLLLTW). The Glutaredoxin domain maps to 157–272 (RTDFLDIIRT…PLLKSEARGN (116 aa)).

The protein resides in the membrane. The polypeptide is Pheromone-regulated membrane protein 4 (PRM4) (Saccharomyces cerevisiae (strain ATCC 204508 / S288c) (Baker's yeast)).